Consider the following 520-residue polypeptide: Eukaryotic translation initiation factor 3 subunit L (520 aa).

The PCI domain occupies 278 to 478 (FATYYYVGIC…ELDIALENDL (201 aa)).

It belongs to the eIF-3 subunit L family. Component of the eukaryotic translation initiation factor 3 (eIF-3) complex.

The protein localises to the cytoplasm. Component of the eukaryotic translation initiation factor 3 (eIF-3) complex, which is involved in protein synthesis of a specialized repertoire of mRNAs and, together with other initiation factors, stimulates binding of mRNA and methionyl-tRNAi to the 40S ribosome. The eIF-3 complex specifically targets and initiates translation of a subset of mRNAs involved in cell proliferation. The sequence is that of Eukaryotic translation initiation factor 3 subunit L from Yarrowia lipolytica (strain CLIB 122 / E 150) (Yeast).